The chain runs to 660 residues: Acetyl-coenzyme A synthetase (660 aa).

CoA contacts are provided by residues 197–200 and threonine 317; that span reads RGGK. ATP contacts are provided by residues 397–399, 421–426, aspartate 512, and arginine 528; these read GEP and DTFWQT. CoA is bound at residue serine 536. Arginine 539 lines the ATP pocket. 2 residues coordinate Mg(2+): valine 550 and valine 555. Lysine 625 carries the N6-acetyllysine modification.

It belongs to the ATP-dependent AMP-binding enzyme family. Mg(2+) is required as a cofactor. Acetylated. Deacetylation by the SIR2-homolog deacetylase activates the enzyme.

The enzyme catalyses acetate + ATP + CoA = acetyl-CoA + AMP + diphosphate. Catalyzes the conversion of acetate into acetyl-CoA (AcCoA), an essential intermediate at the junction of anabolic and catabolic pathways. AcsA undergoes a two-step reaction. In the first half reaction, AcsA combines acetate with ATP to form acetyl-adenylate (AcAMP) intermediate. In the second half reaction, it can then transfer the acetyl group from AcAMP to the sulfhydryl group of CoA, forming the product AcCoA. The sequence is that of Acetyl-coenzyme A synthetase from Ralstonia nicotianae (strain ATCC BAA-1114 / GMI1000) (Ralstonia solanacearum).